A 318-amino-acid polypeptide reads, in one-letter code: Retinol dehydrogenase 5 (318 aa).

Residues 1-23 traverse the membrane as a helical segment; that stretch reads MWLPLLLGALLWAVLWLLRDRQS. Residues 24–288 lie on the Lumenal side of the membrane; it reads LPASDAFIFI…TRYSPGWDAK (265 aa). 32 to 56 contributes to the NADP(+) binding site; the sequence is FITGCDSGFGRLLALQLDQKGFQVL. Residue S163 participates in substrate binding. Y175 (proton acceptor) is an active-site residue. The chain crosses the membrane as a helical span at residues 289-309; that stretch reads LLWLPASYLPARVVDAVLTWI. At 310-318 the chain is on the cytoplasmic side; it reads LPRPAQSVS.

This sequence belongs to the short-chain dehydrogenases/reductases (SDR) family. In terms of assembly, homodimer. Expressed in eye, liver, kidney, brain, intestine, placenta, epididymus and submaxillary gland. In eye, strongly expressed in the retinal pigment epithelium, with lower expression levels detected in the inner segment of the photoreceptor cells and in the outer plexiform layer. In kidney, strong expression detected in the distal tubules and the transitional epithelium in the renal pelvis, with weaker expression detected in the epithelium of the outer stripe of the outer zone of the medulla. In liver, detected in hepatocytes in the centrilobular area. In lung, present in club cells in the epithelium of the bronchiole, in parenchyma and in cartilage surrounding the secondary bronchi. In skin, expressed in epidermis, hair follicles and mast cells in the dermis. Expressed in heart. Not detected in heart. Not detected in lung, spleen, skeletal muscle and testis.

The protein localises to the endoplasmic reticulum membrane. It carries out the reaction 11-cis-retinol + NAD(+) = 11-cis-retinal + NADH + H(+). The catalysed reaction is 9-cis-retinol + NAD(+) = 9-cis-retinal + NADH + H(+). The enzyme catalyses 13-cis-retinol + NAD(+) = 13-cis-retinal + NADH + H(+). It catalyses the reaction androsterone + NAD(+) = 5alpha-androstan-3,17-dione + NADH + H(+). It carries out the reaction 5alpha-androstane-3alpha,17beta-diol + NAD(+) = 17beta-hydroxy-5alpha-androstan-3-one + NADH + H(+). It participates in cofactor metabolism; retinol metabolism. Its activity is regulated as follows. Inhibited by 9-cis-, 13-cis- and all-trans-retinoic acids, with the most potent inhibitor being 13-cis-retinoic acid. Weakly inhibited by oleic acid. In terms of biological role, catalyzes the oxidation of cis-isomers of retinol, including 11-cis-, 9-cis-, and 13-cis-retinol in an NAD-dependent manner. Has no activity towards all-trans retinal. Plays a significant role in 11-cis retinol oxidation in the retinal pigment epithelium cells (RPE). Also recognizes steroids (androsterone, androstanediol) as its substrates. This is Retinol dehydrogenase 5 from Mus musculus (Mouse).